Here is a 115-residue protein sequence, read N- to C-terminus: Parathyroid hormone (115 aa).

An N-terminal signal peptide occupies residues 1 to 25 (MMSAKDTVKVMVVMLAICFLARSDG). A propeptide spanning residues 26–31 (KPIKKR) is cleaved from the precursor. The segment at 51–69 (RVEWLRKKLQDVHNFVALG) is important for receptor binding. A disordered region spans residues 75–98 (RDGGSQRPRKKEDNVLVESHQKSL).

Belongs to the parathyroid hormone family. In terms of assembly, interacts with PTH1R (via N-terminal extracellular domain).

The protein localises to the secreted. Its function is as follows. Parathyroid hormone elevates calcium level by dissolving the salts in bone and preventing their renal excretion. Acts by binding to its receptor, PTH1R, activating G protein-coupled receptor signaling. Stimulates [1-14C]-2-deoxy-D-glucose (2DG) transport and glycogen synthesis in osteoblastic cells. This is Parathyroid hormone (PTH) from Sus scrofa (Pig).